The primary structure comprises 85 residues: Kunitz-type serine protease inhibitor homolog beta-bungarotoxin B3 chain (85 aa).

The N-terminal stretch at Met1 to Ser24 is a signal peptide. In terms of domain architecture, BPTI/Kunitz inhibitor spans Cys31–Cys81. 3 cysteine pairs are disulfide-bonded: Cys31-Cys81, Cys40-Cys64, and Cys56-Cys77.

The protein belongs to the venom Kunitz-type family. In terms of assembly, heterodimer; disulfide-linked. The A chains have phospholipase A2 activity and the B chains show homology with the basic protease inhibitors. In terms of tissue distribution, expressed by the venom gland.

It is found in the secreted. Its function is as follows. Beta-bungarotoxins are presynaptic neurotoxins of the venom. The B chain is homologous to venom basic protease inhibitors but has no protease inhibitor activity and blocks voltage-gated potassium channels (Kv). The polypeptide is Kunitz-type serine protease inhibitor homolog beta-bungarotoxin B3 chain (Bungarus multicinctus (Many-banded krait)).